Here is a 159-residue protein sequence, read N- to C-terminus: Urease accessory protein UreE (159 aa).

Belongs to the UreE family.

It localises to the cytoplasm. Involved in urease metallocenter assembly. Binds nickel. Probably functions as a nickel donor during metallocenter assembly. This chain is Urease accessory protein UreE, found in Pseudomonas entomophila (strain L48).